The chain runs to 241 residues: MQCFKFIKVMMILFNLLIFLCGAALLAVGIWVSVDGTSFLKAFGSLSSSAMQFVNVGYFLIAAGAVLFILGFLGCYGAHSENKCVLMMFFSILLIIFIAEIAGAVVALVYTTMAEQFLTFLVVPAIEKDYGYQTEFTQVWNSTMEGLHCCGFNNYTDFNSSRFVKENKVFPPFCCANNTDSHTVEPCTEDKAKSMNVQGCFKQILQKIRTNAVTVGGVAVGVAALELAAMVVSMYLYCNLK.

3 helical membrane passes run 12 to 32 (ILFN…GIWV), 53 to 73 (FVNV…LGFL), and 89 to 109 (FFSI…VALV). A glycan (N-linked (GlcNAc...) asparagine) is linked at asparagine 154. Residues 212–232 (AVTVGGVAVGVAALELAAMVV) form a helical membrane-spanning segment.

The protein belongs to the tetraspanin (TM4SF) family. As to quaternary structure, interacts with SLC19A2. Interacts with NTRK1/TRKA.

The protein resides in the cell membrane. Its subcellular location is the lysosome membrane. Its function is as follows. Structural component of specialized membrane microdomains known as tetraspanin-enriched microdomains (TERMs), which act as platforms for receptor clustering and signaling. Participates thereby in diverse biological functions such as cell signal transduction, adhesion, migration and protein trafficking. Regulates neuronal differentiation in response to NGF by facilitating NGF-mediated activation of NTRK1/TRKA receptor tyrosine kinase and subsequent downstream signaling pathways. Plays a role in the inhibition of TNFalpha-induced apoptosis. Mechanistically, inhibits the NF-kappa-B signaling pathway by blocking phosphorylation of CHUK. Also promotes the stability of the thiamine transporter 1/SLC19A2 in intestinal epithelial cells leading to an increase of thiamine uptake process. The protein is Tetraspanin-1 (Tspan1) of Rattus norvegicus (Rat).